Here is a 207-residue protein sequence, read N- to C-terminus: 3-demethoxyubiquinol 3-hydroxylase (207 aa).

Fe cation contacts are provided by glutamate 56, glutamate 86, histidine 89, glutamate 138, glutamate 170, and histidine 173.

The protein belongs to the COQ7 family. It depends on Fe cation as a cofactor.

Its subcellular location is the cell membrane. It carries out the reaction a 5-methoxy-2-methyl-3-(all-trans-polyprenyl)benzene-1,4-diol + AH2 + O2 = a 3-demethylubiquinol + A + H2O. It participates in cofactor biosynthesis; ubiquinone biosynthesis. Its function is as follows. Catalyzes the hydroxylation of 2-nonaprenyl-3-methyl-6-methoxy-1,4-benzoquinol during ubiquinone biosynthesis. The chain is 3-demethoxyubiquinol 3-hydroxylase from Cupriavidus necator (strain ATCC 17699 / DSM 428 / KCTC 22496 / NCIMB 10442 / H16 / Stanier 337) (Ralstonia eutropha).